The chain runs to 888 residues: Inactive deaminase YJL070C (888 aa).

The segment at 1–42 is disordered; it reads MQAVERRPSLLFDEYQNSVTKPNETKNKEARVLSENDGDVSP. Phosphoserine is present on Ser9. Basic and acidic residues predominate over residues 23–34; the sequence is NETKNKEARVLS. Phosphoserine occurs at positions 41, 178, and 180.

Belongs to the metallo-dependent hydrolases superfamily. Adenosine and AMP deaminases family.

This chain is Inactive deaminase YJL070C, found in Saccharomyces cerevisiae (strain ATCC 204508 / S288c) (Baker's yeast).